The chain runs to 327 residues: GMP reductase (327 aa).

The Thioimidate intermediate role is filled by Cys-176. 205–228 contributes to the NADP(+) binding site; it reads IIADGGIRTHGDIAKSIRFGASMV.

Belongs to the IMPDH/GMPR family. GuaC type 2 subfamily.

It carries out the reaction IMP + NH4(+) + NADP(+) = GMP + NADPH + 2 H(+). Its function is as follows. Catalyzes the irreversible NADPH-dependent deamination of GMP to IMP. It functions in the conversion of nucleobase, nucleoside and nucleotide derivatives of G to A nucleotides, and in maintaining the intracellular balance of A and G nucleotides. This is GMP reductase from Streptococcus suis (strain 05ZYH33).